Here is a 239-residue protein sequence, read N- to C-terminus: Putative HTH-type transcriptional regulator YkgA (239 aa).

The HTH araC/xylS-type domain occupies Gln-19 to Arg-117. 2 DNA-binding regions (H-T-H motif) span residues Glu-36–Met-57 and Met-84–Phe-107.

The polypeptide is Putative HTH-type transcriptional regulator YkgA (ykgA) (Escherichia coli (strain K12)).